Reading from the N-terminus, the 1468-residue chain is ABC transporter G family member 34 (1468 aa).

Residues 33 to 53 (NGAFSRSSSSSSRRMRGEEDD) are disordered. An ABC transporter 1 domain is found at 178 to 450 (ANALGILPTR…FELMGFKCPE (273 aa)). 211–218 (GPPGSGKT) provides a ligand contact to ATP. Positions 528-741 (ELLKANIDRE…AQNAVSVNEF (214 aa)) constitute an ABC transmembrane type-2 1 domain. 6 consecutive transmembrane segments (helical) span residues 546-566 (FVYI…MTVF), 575-595 (SVAD…MIML), 634-654 (SPMS…VIGF), 666-686 (LLML…GGAA), 690-710 (IVAN…GGFI), and 778-798 (IGFG…TLAL). Residues 871–1123 (LTFEDIKYSV…ELIKYFEGIQ (253 aa)) enclose the ABC transporter 2 domain. 916–923 (GVSGAGKT) contacts ATP. An ABC transmembrane type-2 2 domain is found at 1196–1410 (IQCLACLWKQ…TLYGLIVSQY (215 aa)). Helical transmembrane passes span 1217 to 1237 (AIRL…FWDL), 1247 to 1267 (LFNA…LNGQ), 1303 to 1323 (FPYT…MIGF), 1330 to 1350 (FFWY…YGMM), 1360 to 1380 (VASI…GFVI), 1387 to 1407 (VWWR…GLIV), and 1440 to 1460 (FVAV…GFAI).

The protein belongs to the ABC transporter superfamily. ABCG family. PDR (TC 3.A.1.205) subfamily.

It is found in the membrane. In terms of biological role, may be a general defense protein. The chain is ABC transporter G family member 34 from Oryza sativa subsp. japonica (Rice).